The following is a 208-amino-acid chain: GTP cyclohydrolase 1 (208 aa).

Zn(2+) is bound by residues cysteine 98, histidine 101, and cysteine 169.

It belongs to the GTP cyclohydrolase I family. In terms of assembly, toroid-shaped homodecamer, composed of two pentamers of five dimers.

It carries out the reaction GTP + H2O = 7,8-dihydroneopterin 3'-triphosphate + formate + H(+). The protein operates within cofactor biosynthesis; 7,8-dihydroneopterin triphosphate biosynthesis; 7,8-dihydroneopterin triphosphate from GTP: step 1/1. This chain is GTP cyclohydrolase 1, found in Agrobacterium fabrum (strain C58 / ATCC 33970) (Agrobacterium tumefaciens (strain C58)).